The following is a 315-amino-acid chain: Aspartate carbamoyltransferase catalytic subunit (315 aa).

Positions 64 and 65 each coordinate carbamoyl phosphate. L-aspartate is bound at residue K92. Carbamoyl phosphate is bound by residues R114, H142, and Q145. Residues R175 and R229 each contribute to the L-aspartate site. Positions 270 and 271 each coordinate carbamoyl phosphate.

The protein belongs to the aspartate/ornithine carbamoyltransferase superfamily. ATCase family. In terms of assembly, heterododecamer (2C3:3R2) of six catalytic PyrB chains organized as two trimers (C3), and six regulatory PyrI chains organized as three dimers (R2).

It catalyses the reaction carbamoyl phosphate + L-aspartate = N-carbamoyl-L-aspartate + phosphate + H(+). Its pathway is pyrimidine metabolism; UMP biosynthesis via de novo pathway; (S)-dihydroorotate from bicarbonate: step 2/3. Its function is as follows. Catalyzes the condensation of carbamoyl phosphate and aspartate to form carbamoyl aspartate and inorganic phosphate, the committed step in the de novo pyrimidine nucleotide biosynthesis pathway. In Xanthobacter autotrophicus (strain ATCC BAA-1158 / Py2), this protein is Aspartate carbamoyltransferase catalytic subunit.